The following is a 243-amino-acid chain: Biosynthetic peptidoglycan transglycosylase (243 aa).

The chain crosses the membrane as a helical span at residues 21-43 (LLIVSLVSALMSVLQVIVFRFVD).

Belongs to the glycosyltransferase 51 family.

The protein resides in the cell inner membrane. It carries out the reaction [GlcNAc-(1-&gt;4)-Mur2Ac(oyl-L-Ala-gamma-D-Glu-L-Lys-D-Ala-D-Ala)](n)-di-trans,octa-cis-undecaprenyl diphosphate + beta-D-GlcNAc-(1-&gt;4)-Mur2Ac(oyl-L-Ala-gamma-D-Glu-L-Lys-D-Ala-D-Ala)-di-trans,octa-cis-undecaprenyl diphosphate = [GlcNAc-(1-&gt;4)-Mur2Ac(oyl-L-Ala-gamma-D-Glu-L-Lys-D-Ala-D-Ala)](n+1)-di-trans,octa-cis-undecaprenyl diphosphate + di-trans,octa-cis-undecaprenyl diphosphate + H(+). It participates in cell wall biogenesis; peptidoglycan biosynthesis. In terms of biological role, peptidoglycan polymerase that catalyzes glycan chain elongation from lipid-linked precursors. This chain is Biosynthetic peptidoglycan transglycosylase, found in Xylella fastidiosa (strain M12).